The chain runs to 192 residues: Ribosomal RNA small subunit methyltransferase G (192 aa).

Residues glycine 63, phenylalanine 68, 112–113 (IE), and arginine 125 contribute to the S-adenosyl-L-methionine site.

It belongs to the methyltransferase superfamily. RNA methyltransferase RsmG family.

Its subcellular location is the cytoplasm. The enzyme catalyses guanosine(527) in 16S rRNA + S-adenosyl-L-methionine = N(7)-methylguanosine(527) in 16S rRNA + S-adenosyl-L-homocysteine. Functionally, specifically methylates the N7 position of guanine in position 527 of 16S rRNA. The protein is Ribosomal RNA small subunit methyltransferase G of Rickettsia bellii (strain OSU 85-389).